Here is a 463-residue protein sequence, read N- to C-terminus: Perilipin-5 (463 aa).

Positions Met1–Leu32 are disordered. The interval Met1–Gln123 is interaction with LIPE. The segment at Met1 to Leu188 is essential for lipid droplet targeting. Phosphoserine is present on residues Ser17, Ser163, and Ser337. The span at Ser17–Gly26 shows a compositional bias: polar residues. The segment at Val200 to Phe463 is interaction with PNPLA2 and ABHD5. The disordered stretch occupies residues Ala433–Phe463. The tract at residues Gln444 to Phe463 is necessary for mitochondria recruitment at the lipid droplet surface.

Belongs to the perilipin family. Homooligomer. Interacts with PNPLA2; prevents interaction of PNPLA2 with ABHD5. Interacts with ABHD5; targets ABHD5 to lipid droplets and promotes interaction of ABHD5 with PNPLA2. Interacts with LIPE. In terms of processing, phosphorylated by PKA. Phosphorylated on serine in skeletal muscle at rest or with lipolytic stimulation. Highly expressed in oxidative tissues, including heart, liver, brown adipose tissue (BAT) and slow-twitch fibers of skeletal muscle. Lower expression in epididymal white adipose tissue and anterior tibialis and quadriceps. Expressed in adrenal glands. Isoform 2 has the highest expression in heart.

Its subcellular location is the lipid droplet. The protein localises to the cytoplasm. The protein resides in the mitochondrion. Lipid droplet-associated protein that maintains the balance between lipogenesis and lipolysis and also regulates fatty acid oxidation in oxidative tissues. Recruits mitochondria to the surface of lipid droplets and is involved in lipid droplet homeostasis by regulating both the storage of fatty acids in the form of triglycerides and the release of fatty acids for mitochondrial fatty acid oxidation. In lipid droplet triacylglycerol hydrolysis, plays a role as a scaffolding protein for three major key lipolytic players: ABHD5, PNPLA2 and LIPE. Reduces the triacylglycerol hydrolase activity of PNPLA2 by recruiting and sequestering PNPLA2 to lipid droplets. Phosphorylation by PKA enables lipolysis probably by promoting release of ABHD5 from the perilipin scaffold and by facilitating interaction of ABHD5 with PNPLA2. Also increases lipolysis through interaction with LIPE and upon PKA-mediated phosphorylation of LIPE. The sequence is that of Perilipin-5 (Plin5) from Mus musculus (Mouse).